A 218-amino-acid chain; its full sequence is Ropporin-1-like protein (218 aa).

Residues Pro17 to Asp54 form the RIIa domain. Residues Gln199–Lys218 form a disordered region.

Belongs to the ropporin family. Component of axonemal radial spoke complexes.

The protein localises to the cell projection. The protein resides in the cilium. It localises to the flagellum. Its function is as follows. Functions as part of axonemal radial spoke complexes that play an important part in the motility of sperm and cilia. Important for male fertility. Involved in fibrous sheath integrity and sperm motility, plays a role in PKA-dependent signaling processes required for spermatozoa capacitation. This is Ropporin-1-like protein (ropn1l) from Danio rerio (Zebrafish).